Consider the following 1578-residue polypeptide: Mediator of RNA polymerase II transcription subunit 14 (1578 aa).

Positions 49–53 match the LXXLL motif 1 motif; sequence LAELL. The tract at residues 561–582 is disordered; sequence SQSVTAGGTSQSSAPSAATTES. Residues 565-580 show a composition bias toward low complexity; sequence TAGGTSQSSAPSAATT. The LXXLL motif 2 motif lies at 739–743; sequence LKRLL. 2 disordered regions span residues 1009–1173 and 1510–1578; these read RRRS…PDHK and APGG…GGPN. A compositionally biased stretch (polar residues) spans 1084 to 1093; it reads SQSHPNFNMT. Composition is skewed to pro residues over residues 1095-1104 and 1157-1167; these read PPAPHMPHPS and PGMPRPSPRPG. Composition is skewed to gly residues over residues 1510-1521 and 1547-1578; these read APGGPGGPGPMG and MGGG…GGPN.

The protein belongs to the Mediator complex subunit 14 family. As to quaternary structure, component of the Mediator complex.

The protein resides in the nucleus. Component of the Mediator complex, a coactivator involved in the regulated transcription of nearly all RNA polymerase II-dependent genes. Mediator functions as a bridge to convey information from gene-specific regulatory proteins to the basal RNA polymerase II transcription machinery. Mediator is recruited to promoters by direct interactions with regulatory proteins and serves as a scaffold for the assembly of a functional preinitiation complex with RNA polymerase II and the general transcription factors. The sequence is that of Mediator of RNA polymerase II transcription subunit 14 (MED14) from Aedes aegypti (Yellowfever mosquito).